Consider the following 642-residue polypeptide: Threonine--tRNA ligase (642 aa).

The region spanning 1-61 is the TGS domain; the sequence is MPVITLPDGS…ENDAQLAIIT (61 aa). The tract at residues 243-534 is catalytic; that stretch reads DHRKIGKQLD…LTEEFAGFFP (292 aa). K286 carries the N6-acetyllysine modification. Zn(2+) contacts are provided by C334, H385, and H511.

Belongs to the class-II aminoacyl-tRNA synthetase family. In terms of assembly, homodimer. It depends on Zn(2+) as a cofactor.

The protein resides in the cytoplasm. It catalyses the reaction tRNA(Thr) + L-threonine + ATP = L-threonyl-tRNA(Thr) + AMP + diphosphate + H(+). Its function is as follows. Catalyzes the attachment of threonine to tRNA(Thr) in a two-step reaction: L-threonine is first activated by ATP to form Thr-AMP and then transferred to the acceptor end of tRNA(Thr). Also edits incorrectly charged L-seryl-tRNA(Thr). The sequence is that of Threonine--tRNA ligase from Escherichia fergusonii (strain ATCC 35469 / DSM 13698 / CCUG 18766 / IAM 14443 / JCM 21226 / LMG 7866 / NBRC 102419 / NCTC 12128 / CDC 0568-73).